Reading from the N-terminus, the 311-residue chain is Probable 5-dehydro-4-deoxyglucarate dehydratase (311 aa).

It belongs to the DapA family.

It catalyses the reaction 5-dehydro-4-deoxy-D-glucarate + H(+) = 2,5-dioxopentanoate + CO2 + H2O. It functions in the pathway carbohydrate acid metabolism; D-glucarate degradation; 2,5-dioxopentanoate from D-glucarate: step 2/2. This is Probable 5-dehydro-4-deoxyglucarate dehydratase from Ralstonia nicotianae (strain ATCC BAA-1114 / GMI1000) (Ralstonia solanacearum).